We begin with the raw amino-acid sequence, 237 residues long: Lycopene beta-cyclase (237 aa).

Helical transmembrane passes span 3–23 (TSYLTFLAVAVGPPLVALGVV), 38–58 (VGILLALALSYTTPWDNYLIA), 80–100 (EYLFVITQTLLTGLWVQALPL), 113–133 (AVLGALAGVLVGCGGAVLLTV), 137–157 (FYIGAIIAWAAPVLALQWAVG), 170–192 (AAVLVPTLFLSAADRYAIADGIW), and 213–233 (AFFFVTNVFVSQGLILYAWVL).

The protein belongs to the lycopene beta-cyclase family.

The protein localises to the cell membrane. It carries out the reaction a carotenoid psi-end group = a carotenoid beta-end derivative. It catalyses the reaction all-trans-lycopene = gamma-carotene. The catalysed reaction is gamma-carotene = all-trans-beta-carotene. It functions in the pathway carotenoid biosynthesis; beta-carotene biosynthesis. Catalyzes the cyclization of both ends of lycopene to form beta-carotene, a retinal precursor. Is required for bacteriorhodopsin biogenesis, a light-driven proton pump with a covalently bound retinal cofactor. In Halobacterium salinarum (strain ATCC 29341 / DSM 671 / R1), this protein is Lycopene beta-cyclase.